The sequence spans 505 residues: Deoxyguanosinetriphosphate triphosphohydrolase (505 aa).

The HD domain occupies 66–273 (RLTHSMEVQQ…MEAADDISYC (208 aa)).

The protein belongs to the dGTPase family. Type 1 subfamily. Homotetramer. Requires Mg(2+) as cofactor.

It carries out the reaction dGTP + H2O = 2'-deoxyguanosine + triphosphate + H(+). Functionally, dGTPase preferentially hydrolyzes dGTP over the other canonical NTPs. This chain is Deoxyguanosinetriphosphate triphosphohydrolase, found in Shigella boydii serotype 18 (strain CDC 3083-94 / BS512).